The primary structure comprises 157 residues: DNA gyrase inhibitor 2 (157 aa).

This sequence belongs to the DNA gyrase inhibitor family. In terms of assembly, interacts with DNA gyrase.

The protein localises to the cytoplasm. Inhibits the supercoiling activity of DNA gyrase. Acts by inhibiting DNA gyrase at an early step, prior to (or at the step of) binding of DNA by the gyrase. It protects cells against toxins that target DNA gyrase, by inhibiting activity of these toxins and reducing the formation of lethal double-strand breaks in the cell. This is DNA gyrase inhibitor 2 from Dickeya dadantii (strain 3937) (Erwinia chrysanthemi (strain 3937)).